Reading from the N-terminus, the 443-residue chain is Glutamine synthetase (443 aa).

A GS beta-grasp domain is found at 16–97 (KRIKFVQLIF…VYGYIYKDGK (82 aa)). The GS catalytic domain maps to 103–443 (PRGVLRRTLE…EWELERYFFI (341 aa)). Mg(2+) is bound by residues E126 and E128. E176 contributes to the ATP binding site. Residues E181 and E188 each contribute to the Mg(2+) site. G233 lines the L-glutamate pocket. Position 237 (H237) interacts with Mg(2+). ATP is bound by residues 239 to 241 (HIS) and S241. L-glutamate contacts are provided by R287, E293, and R305. 2 residues coordinate ATP: R305 and R310. E322 serves as a coordination point for Mg(2+). R324 lines the L-glutamate pocket.

Belongs to the glutamine synthetase family. As to quaternary structure, oligomer of 12 subunits arranged in the form of two hexagons. The cofactor is Mg(2+).

It is found in the cytoplasm. It catalyses the reaction L-glutamate + NH4(+) + ATP = L-glutamine + ADP + phosphate + H(+). Functionally, probably involved in nitrogen metabolism via ammonium assimilation. Catalyzes the ATP-dependent biosynthesis of glutamine from glutamate and ammonia. The chain is Glutamine synthetase from Pyrococcus horikoshii (strain ATCC 700860 / DSM 12428 / JCM 9974 / NBRC 100139 / OT-3).